The primary structure comprises 383 residues: Chaperone protein DnaJ (383 aa).

The J domain maps to 5–70; the sequence is DYYELLGVSR…QKRAAYDRFG (66 aa). The segment at 140-219 adopts a CR-type zinc-finger fold; that stretch reads GTKTEIRVPT…CSGAGTVPRE (80 aa). Cys-153, Cys-156, Cys-171, Cys-174, Cys-193, Cys-196, Cys-207, and Cys-210 together coordinate Zn(2+). 4 CXXCXGXG motif repeats span residues 153 to 160, 171 to 178, 193 to 200, and 207 to 214; these read CDACSGTG, CPTCGGAG, and CRVCSGAG.

This sequence belongs to the DnaJ family. Homodimer. The cofactor is Zn(2+).

Its subcellular location is the cytoplasm. Functionally, participates actively in the response to hyperosmotic and heat shock by preventing the aggregation of stress-denatured proteins and by disaggregating proteins, also in an autonomous, DnaK-independent fashion. Unfolded proteins bind initially to DnaJ; upon interaction with the DnaJ-bound protein, DnaK hydrolyzes its bound ATP, resulting in the formation of a stable complex. GrpE releases ADP from DnaK; ATP binding to DnaK triggers the release of the substrate protein, thus completing the reaction cycle. Several rounds of ATP-dependent interactions between DnaJ, DnaK and GrpE are required for fully efficient folding. Also involved, together with DnaK and GrpE, in the DNA replication of plasmids through activation of initiation proteins. The protein is Chaperone protein DnaJ of Acidiphilium cryptum (strain JF-5).